Here is a 110-residue protein sequence, read N- to C-terminus: Competence pilus inhibition repressor (110 aa).

One can recognise an HTH cro/C1-type domain in the interval 7-61 (VRFLRKRQGWTQQQLADFSHTSKSNISNLENGNQGYSPAILEYLAKAFNCSVSQI). Positions 18–37 (QQQLADFSHTSKSNISNLEN) form a DNA-binding region, H-T-H motif.

Functionally, represses transcription of the PilB-specific inhibitory protein CpiA. This chain is Competence pilus inhibition repressor, found in Acinetobacter baylyi (strain ATCC 33305 / BD413 / ADP1).